A 193-amino-acid chain; its full sequence is Thymidine kinase (193 aa).

ATP contacts are provided by residues 9–16 and 87–90; these read STMNAGKS and DEAQ. Catalysis depends on glutamate 88, which acts as the Proton acceptor. Zn(2+) is bound by residues cysteine 145, cysteine 147, cysteine 182, and histidine 185.

This sequence belongs to the thymidine kinase family. Homotetramer.

It is found in the cytoplasm. The catalysed reaction is thymidine + ATP = dTMP + ADP + H(+). This chain is Thymidine kinase, found in Haemophilus influenzae (strain ATCC 51907 / DSM 11121 / KW20 / Rd).